Reading from the N-terminus, the 575-residue chain is Amyloid-beta A4 precursor protein-binding family A member 3 (575 aa).

Residue methionine 1 is modified to N-acetylmethionine. Over residues 1-10 the composition is skewed to polar residues; sequence MDFPTISRSP. Disordered regions lie at residues 1 to 50 and 118 to 211; these read MDFP…LSRM and CEEC…GPCD. Serine 11 bears the Phosphoserine mark. The span at 143–153 shows a compositional bias: acidic residues; sequence EDPDEDSDSPE. Residues 156–184 are compositionally biased toward low complexity; that stretch reads EGASAEQEGSRSSSSSPEPWLETVPLVTP. At serine 171 the chain carries Phosphoserine. Residues 215-364 form a required for interaction with NECAB3 region; it reads LLDGVIFGAR…QFLRESGIDP (150 aa). The PID domain maps to 217–381; sequence DGVIFGARYL…SPGACHLHNG (165 aa). Residue serine 372 is modified to Phosphoserine. PDZ domains follow at residues 394–480 and 485–560; these read EVHL…IVHC and TAII…TMPA.

Binds to the cytoplasmic domain of amyloid protein (APP) in vivo. Interacts with HIF1AN (via N-terminus). Interacts with NECAB3; seems to mediate the interaction between NECAB3 and HIF1AN. As to expression, expressed in all tissues examined with lower levels in brain and testis.

The protein localises to the cytoplasm. The protein resides in the perinuclear region. May modulate processing of the amyloid-beta precursor protein (APP) and hence formation of APP-beta. May enhance the activity of HIF1A in macrophages by inhibiting the activity of HIF1AN. This is Amyloid-beta A4 precursor protein-binding family A member 3 (APBA3) from Homo sapiens (Human).